A 102-amino-acid chain; its full sequence is MKHEMMNIKPRCITIFFLLFALLLGNYVVQASRPRSIENTVSLLPQVHLLNSRRRHMIGSTAPTCTYNECRGCRYKCRAEQVPVEGNDPINSAYHYRCVCHR.

The first 31 residues, 1-31 (MKHEMMNIKPRCITIFFLLFALLLGNYVVQA), serve as a signal peptide directing secretion. 3 cysteine pairs are disulfide-bonded: C65–C98, C70–C77, and C73–C100.

This sequence belongs to the plant cysteine rich small secretory peptide family. Epidermal patterning factor subfamily. As to quaternary structure, interacts with ERECTA and TMM. In terms of tissue distribution, expressed in immature organs, including leaves, stems and flower buds, but not in roots, shoot apical meristem and petals. Detected in the mesophyll tissues but not in the epidermal tissues where stomata develop.

It is found in the secreted. Its subcellular location is the extracellular space. The protein localises to the apoplast. Positively regulates stomatal density and patterning. Acts by competing with EPF2 (AC Q8LC53) for the same receptors, ERECTA (AC Q42371) and TMM (AC Q9SSD1). Not cleaved by the protease CRSP (AC Q9LNU1). This chain is EPIDERMAL PATTERNING FACTOR-like protein 9, found in Arabidopsis thaliana (Mouse-ear cress).